The sequence spans 107 residues: MMEGLGEHSTAGEMGPLLGAVAATASPQSLMEYSSDADFIESLPLVVKYRVYTLKKLQAKCAVLEAKYLREFHSVERKFATIYGPLLEKRRQITNALYEPTKEECER.

This sequence belongs to the nucleosome assembly protein (NAP) family.

This chain is Putative nucleosome assembly protein 1-like 6, found in Homo sapiens (Human).